A 195-amino-acid chain; its full sequence is Small ribosomal subunit protein uS4 (195 aa).

Residues 88–150 (RRLENVVYRL…SKNVELIKLA (63 aa)) form the S4 RNA-binding domain.

The protein belongs to the universal ribosomal protein uS4 family. Part of the 30S ribosomal subunit. Contacts protein S5. The interaction surface between S4 and S5 is involved in control of translational fidelity.

Its function is as follows. One of the primary rRNA binding proteins, it binds directly to 16S rRNA where it nucleates assembly of the body of the 30S subunit. With S5 and S12 plays an important role in translational accuracy. The sequence is that of Small ribosomal subunit protein uS4 from Fusobacterium nucleatum subsp. nucleatum (strain ATCC 25586 / DSM 15643 / BCRC 10681 / CIP 101130 / JCM 8532 / KCTC 2640 / LMG 13131 / VPI 4355).